A 194-amino-acid chain; its full sequence is MAGSFTRKMYDNCATQQTTKQSTDPLELLLDVNKYVNCNNICKPLAQRYPSSAQLVDVESSLWGIDKLASRCDSSKHPFCAKNGCLLTNDPRIAPHITPYACEWGHTGDNSVVTTNMKMPSHPGYTLPNPNICKDQTNGYYHNAVKSPNMTGPQHQVIPQHQVVPQHQTVPQHQSVIKPKADQLRYQNIQNRPY.

The protein belongs to the mimivirus R457/R459 family.

The protein resides in the virion. This is an uncharacterized protein from Acanthamoeba polyphaga mimivirus (APMV).